The following is a 109-amino-acid chain: Large ribosomal subunit protein uL22 (109 aa).

It belongs to the universal ribosomal protein uL22 family. Part of the 50S ribosomal subunit.

This protein binds specifically to 23S rRNA; its binding is stimulated by other ribosomal proteins, e.g. L4, L17, and L20. It is important during the early stages of 50S assembly. It makes multiple contacts with different domains of the 23S rRNA in the assembled 50S subunit and ribosome. Functionally, the globular domain of the protein is located near the polypeptide exit tunnel on the outside of the subunit, while an extended beta-hairpin is found that lines the wall of the exit tunnel in the center of the 70S ribosome. This is Large ribosomal subunit protein uL22 from Paraburkholderia xenovorans (strain LB400).